The chain runs to 216 residues: Probable GTP-binding protein EngB (216 aa).

An EngB-type G domain is found at 30–204; sequence DGLEVAFAGR…HDVLARWLGL (175 aa). GTP contacts are provided by residues 38–45, 64–68, 82–85, 149–152, and 182–185; these read GRSNAGKS, GRTQL, DLPG, TKAD, and LFSA. 2 residues coordinate Mg(2+): Ser-45 and Thr-66.

Belongs to the TRAFAC class TrmE-Era-EngA-EngB-Septin-like GTPase superfamily. EngB GTPase family. It depends on Mg(2+) as a cofactor.

In terms of biological role, necessary for normal cell division and for the maintenance of normal septation. The sequence is that of Probable GTP-binding protein EngB from Azotobacter vinelandii (strain DJ / ATCC BAA-1303).